The chain runs to 550 residues: MNFGSQTPTIVVLKEGTDASQGKGQIISNINACVAVQEALKPTLGPLGSDILIVTSNQKTTISNDGATILKLLDVVHPAAKTLVDISRAQDAEVGDGTTSVTILAGELMKEAKPFLEEGISSHLIMKGYRKAVSLAVEKINELAVDITSEKSSGRELLERCARTAMSSKLIHNNADFFVKMCVDAVLSLDRNDLDDKLIGIKKIPGGAMEESLFINGVAFKKTFSYAGFEQQPKKFNNPKILSLNVELELKAEKDNAEVRVEHVEDYQAIVDAEWQLIFEKLRQVEETGANIVLSKLPIGDLATQFFADRNIFCAGRVSADDMNRVIQAVGGSIQSTTSDIKPEHLGTCALFEEMQIGSERYNLFQGCPQAKTCTLLLRGGAEQVIAEVERSLHDAIMIVKRALQNKLIVAGGGATEMEVSKCLRDYSKTIAGKQQMIINAFAKALEVIPRQLCENAGFDAIEILNKLRLAHSKGEKWYGVVFETENIGDNFAKFVWEPALVKINALNSATEATNLILSVDETITNKGSESANAGMMPPQGAGRGRGMPM.

Residues Ser-529 to Met-550 form a disordered region.

Belongs to the TCP-1 chaperonin family. Heterooligomeric complex of about 850 to 900 kDa that forms two stacked rings, 12 to 16 nm in diameter.

Its subcellular location is the cytoplasm. Its function is as follows. Molecular chaperone; assists the folding of proteins upon ATP hydrolysis. Known to play a role, in vitro, in the folding of actin and tubulin. In yeast may play a role in mitotic spindle formation. This is T-complex protein 1 subunit eta (CCT7) from Saccharomyces cerevisiae (strain ATCC 204508 / S288c) (Baker's yeast).